Here is a 637-residue protein sequence, read N- to C-terminus: 1-deoxy-D-xylulose-5-phosphate synthase (637 aa).

Thiamine diphosphate is bound by residues histidine 76 and 117 to 119; that span reads GHS. Aspartate 148 is a binding site for Mg(2+). Residues 149–150, asparagine 177, tyrosine 294, and glutamate 381 contribute to the thiamine diphosphate site; that span reads GA. Residue asparagine 177 participates in Mg(2+) binding.

The protein belongs to the transketolase family. DXPS subfamily. Homodimer. It depends on Mg(2+) as a cofactor. Requires thiamine diphosphate as cofactor.

It catalyses the reaction D-glyceraldehyde 3-phosphate + pyruvate + H(+) = 1-deoxy-D-xylulose 5-phosphate + CO2. The protein operates within metabolic intermediate biosynthesis; 1-deoxy-D-xylulose 5-phosphate biosynthesis; 1-deoxy-D-xylulose 5-phosphate from D-glyceraldehyde 3-phosphate and pyruvate: step 1/1. Its function is as follows. Catalyzes the acyloin condensation reaction between C atoms 2 and 3 of pyruvate and glyceraldehyde 3-phosphate to yield 1-deoxy-D-xylulose-5-phosphate (DXP). The polypeptide is 1-deoxy-D-xylulose-5-phosphate synthase (Neisseria meningitidis serogroup C / serotype 2a (strain ATCC 700532 / DSM 15464 / FAM18)).